We begin with the raw amino-acid sequence, 399 residues long: Acetate kinase 2 (399 aa).

Residue Asn10 coordinates Mg(2+). ATP is bound at residue Lys17. Arg89 lines the substrate pocket. Catalysis depends on Asp146, which acts as the Proton donor/acceptor. Residues 206 to 210, 281 to 283, and 329 to 333 each bind ATP; these read HLGNG, DCR, and GIGEN. Mg(2+) is bound at residue Glu384.

This sequence belongs to the acetokinase family. As to quaternary structure, homodimer. Mg(2+) is required as a cofactor. Requires Mn(2+) as cofactor.

Its subcellular location is the cytoplasm. The catalysed reaction is acetate + ATP = acetyl phosphate + ADP. The protein operates within metabolic intermediate biosynthesis; acetyl-CoA biosynthesis; acetyl-CoA from acetate: step 1/2. Functionally, catalyzes the formation of acetyl phosphate from acetate and ATP. Can also catalyze the reverse reaction. The sequence is that of Acetate kinase 2 from Neisseria meningitidis serogroup A / serotype 4A (strain DSM 15465 / Z2491).